The chain runs to 364 residues: tRNA N6-adenosine threonylcarbamoyltransferase (364 aa).

2 residues coordinate Fe cation: His118 and His122. Substrate is bound by residues 140–144 (LVSGG), Asp173, Gly186, and Asn288. Fe cation is bound at residue Asp316.

The protein belongs to the KAE1 / TsaD family. Fe(2+) serves as cofactor.

It is found in the cytoplasm. The catalysed reaction is L-threonylcarbamoyladenylate + adenosine(37) in tRNA = N(6)-L-threonylcarbamoyladenosine(37) in tRNA + AMP + H(+). Its function is as follows. Required for the formation of a threonylcarbamoyl group on adenosine at position 37 (t(6)A37) in tRNAs that read codons beginning with adenine. Is involved in the transfer of the threonylcarbamoyl moiety of threonylcarbamoyl-AMP (TC-AMP) to the N6 group of A37, together with TsaE and TsaB. TsaD likely plays a direct catalytic role in this reaction. This Cereibacter sphaeroides (strain ATCC 17023 / DSM 158 / JCM 6121 / CCUG 31486 / LMG 2827 / NBRC 12203 / NCIMB 8253 / ATH 2.4.1.) (Rhodobacter sphaeroides) protein is tRNA N6-adenosine threonylcarbamoyltransferase.